We begin with the raw amino-acid sequence, 290 residues long: 33 kDa chaperonin (290 aa).

2 disulfide bridges follow: C231–C233 and C263–C266.

The protein belongs to the HSP33 family. In terms of processing, under oxidizing conditions two disulfide bonds are formed involving the reactive cysteines. Under reducing conditions zinc is bound to the reactive cysteines and the protein is inactive.

It localises to the cytoplasm. Its function is as follows. Redox regulated molecular chaperone. Protects both thermally unfolding and oxidatively damaged proteins from irreversible aggregation. Plays an important role in the bacterial defense system toward oxidative stress. In Thermotoga sp. (strain RQ2), this protein is 33 kDa chaperonin.